The sequence spans 689 residues: Beta-galactosidase Pbg (689 aa).

A substrate-binding site is contributed by arginine 118. Cysteine 122 contacts Zn(2+). Asparagine 156 lines the substrate pocket. The active-site Proton donor is glutamate 157. Zn(2+)-binding residues include cysteine 162, cysteine 164, and cysteine 167. The active-site Nucleophile is the glutamate 318. Residues tryptophan 326 and glutamate 366–histidine 369 contribute to the substrate site.

This sequence belongs to the glycosyl hydrolase 42 family.

It carries out the reaction Hydrolysis of terminal non-reducing beta-D-galactose residues in beta-D-galactosides.. The sequence is that of Beta-galactosidase Pbg from Clostridium perfringens (strain ATCC 13124 / DSM 756 / JCM 1290 / NCIMB 6125 / NCTC 8237 / Type A).